The sequence spans 840 residues: Probable inorganic carbon transporter subunit DabA (840 aa).

Zn(2+) is bound by residues Cys355, Asp357, His539, and Cys554.

It belongs to the inorganic carbon transporter (TC 9.A.2) DabA family. In terms of assembly, forms a complex with DabB. The cofactor is Zn(2+).

The protein resides in the cell membrane. Part of an energy-coupled inorganic carbon pump. This chain is Probable inorganic carbon transporter subunit DabA, found in Roseiflexus castenholzii (strain DSM 13941 / HLO8).